The primary structure comprises 64 residues: Large ribosomal subunit protein bL32 (64 aa).

Residues 1 to 35 (MAVQKSRVTPSRRGMRRAHDALSAKQLSTDPTTGE) form a disordered region.

It belongs to the bacterial ribosomal protein bL32 family.

This is Large ribosomal subunit protein bL32 from Stenotrophomonas maltophilia (strain R551-3).